The sequence spans 147 residues: Angiogenin (147 aa).

A signal peptide spans 1–24; it reads MVMGLGVLLLVFVLGLGLTPPTLA. Residue Q25 is modified to Pyrrolidone carboxylic acid. The active-site Proton acceptor is H37. Residues R45 and D46 each contribute to the tRNA site. Intrachain disulfides connect C50–C105, C63–C116, and C81–C131. The Nucleolar localization signal signature appears at 55 to 59; that stretch reads RRRGL. The tRNA site is built by C105 and V127. Catalysis depends on H138, which acts as the Proton donor.

Belongs to the pancreatic ribonuclease family. As to quaternary structure, homodimer. Interacts with RNH1; inhibiting ANG ribonuclease activity. Interacts with PCNA.

The protein resides in the secreted. Its subcellular location is the nucleus. It is found in the nucleolus. It localises to the cytoplasm. The protein localises to the stress granule. With respect to regulation, has weak tRNA ribonuclease activity by itself due to partial autoinhibition by its C-terminus, which folds into a short alpha-helix that partially occludes the substrate-binding site. In absence of stress, the ribonuclease activity is inhibited by RNH1 in the cytoplasm. In response to stress, dissociates from RNH1 in the cytoplasm and associates with cytoplasmic ribosomes with vacant A-sites: ribosomes directly activate the tRNA ribonuclease activity of ANG by refolding the C-terminal alpha-helix. In response to stress, the angiogenic activity of ANG is inhibited by RNH1 in the nucleus. In terms of biological role, secreted ribonuclease that can either promote or restrict cell proliferation of target cells, depending on the context. Endocytosed in target cells via its receptor PLXNB2 and translocates to the cytoplasm or nucleus. Under stress conditions, localizes to the cytoplasm and promotes the assembly of stress granules (SGs): specifically cleaves a subset of tRNAs within anticodon loops to produce tRNA-derived stress-induced fragments (tiRNAs), resulting in translation repression and inhibition of cell proliferation. tiRNas also prevent formation of apoptosome, thereby promoting cell survival. Preferentially cleaves RNAs between a pyrimidine and an adenosine residue, suggesting that it cleaves the anticodon loop of tRNA(Ala) (32-UUAGCAU-38) after positions 33 and 36. Cleaves a subset of tRNAs, including tRNA(Ala), tRNA(Glu), tRNA(Gly), tRNA(Lys), tRNA(Val), tRNA(His), tRNA(Asp) and tRNA(Sec). Under growth conditions and in differentiated cells, translocates to the nucleus and stimulates ribosomal RNA (rRNA) transcription, including that containing the initiation site sequences of 45S rRNA, thereby promoting cell growth and proliferation. Angiogenin induces vascularization of normal and malignant tissues via its ability to promote rRNA transcription. Involved in hematopoietic stem and progenitor cell (HSPC) growth and survival by promoting rRNA transcription in growth conditions and inhibiting translation in response to stress, respectively. Mediates the crosstalk between myeloid and intestinal epithelial cells to protect the intestinal epithelial barrier integrity: secreted by myeloid cells and promotes intestinal epithelial cells proliferation and survival. Also mediates osteoclast-endothelial cell crosstalk in growing bone: produced by osteoclasts and protects the neighboring vascular cells against senescence by promoting rRNA transcription. This chain is Angiogenin (ANG), found in Pan troglodytes (Chimpanzee).